The sequence spans 239 residues: Pyridoxine 5'-phosphate synthase (239 aa).

Asn-7 contacts 3-amino-2-oxopropyl phosphate. Residue 9 to 10 coordinates 1-deoxy-D-xylulose 5-phosphate; the sequence is DH. Arg-18 lines the 3-amino-2-oxopropyl phosphate pocket. The active-site Proton acceptor is the His-43. Arg-45 and His-50 together coordinate 1-deoxy-D-xylulose 5-phosphate. Glu-70 functions as the Proton acceptor in the catalytic mechanism. Position 100 (Thr-100) interacts with 1-deoxy-D-xylulose 5-phosphate. The active-site Proton donor is His-192. 3-amino-2-oxopropyl phosphate-binding positions include Gly-193 and 214–215; that span reads GH.

The protein belongs to the PNP synthase family. Homooctamer; tetramer of dimers.

Its subcellular location is the cytoplasm. It catalyses the reaction 3-amino-2-oxopropyl phosphate + 1-deoxy-D-xylulose 5-phosphate = pyridoxine 5'-phosphate + phosphate + 2 H2O + H(+). The protein operates within cofactor biosynthesis; pyridoxine 5'-phosphate biosynthesis; pyridoxine 5'-phosphate from D-erythrose 4-phosphate: step 5/5. Catalyzes the complicated ring closure reaction between the two acyclic compounds 1-deoxy-D-xylulose-5-phosphate (DXP) and 3-amino-2-oxopropyl phosphate (1-amino-acetone-3-phosphate or AAP) to form pyridoxine 5'-phosphate (PNP) and inorganic phosphate. The polypeptide is Pyridoxine 5'-phosphate synthase (Pelagibacter ubique (strain HTCC1062)).